The chain runs to 90 residues: Cyclin-dependent kinases regulatory subunit 1 (90 aa).

Belongs to the CKS family.

Functionally, binds to the catalytic subunit of the cyclin dependent kinases and is essential for their biological function. This chain is Cyclin-dependent kinases regulatory subunit 1 (CKS1), found in Oryza sativa subsp. indica (Rice).